The chain runs to 93 residues: Early nodulin-12A (93 aa).

The first 24 residues, M1–A24, serve as a signal peptide directing secretion. The segment at P30–F93 is disordered. Tandem repeats lie at residues P34–E38, P39–K43, P44–E48, P49–K53, P54–D58, P59–K63, P64–E68, P69–K73, P74–E78, and P79–R83. The interval P34–R83 is 10 X 5 AA tandem repeats of P-P-[HQVRT]-[HKNT]-[DEKR]. Over residues H46–F93 the composition is skewed to basic and acidic residues.

It belongs to the plant proline-rich protein superfamily. ENOD12 family. More abundant in the young nodules than the mature nodules.

Its subcellular location is the secreted. The protein localises to the cell wall. Functionally, involved in the infection process during the plant-rhizobium interaction. This chain is Early nodulin-12A (ENOD12A), found in Medicago sativa (Alfalfa).